The following is a 345-amino-acid chain: Phosphoribosylformylglycinamidine cyclo-ligase (345 aa).

This sequence belongs to the AIR synthase family.

Its subcellular location is the cytoplasm. The catalysed reaction is 2-formamido-N(1)-(5-O-phospho-beta-D-ribosyl)acetamidine + ATP = 5-amino-1-(5-phospho-beta-D-ribosyl)imidazole + ADP + phosphate + H(+). It functions in the pathway purine metabolism; IMP biosynthesis via de novo pathway; 5-amino-1-(5-phospho-D-ribosyl)imidazole from N(2)-formyl-N(1)-(5-phospho-D-ribosyl)glycinamide: step 2/2. This is Phosphoribosylformylglycinamidine cyclo-ligase from Staphylococcus carnosus (strain TM300).